Reading from the N-terminus, the 446-residue chain is Regulator of drug sensitivity 2 (446 aa).

Residues 15-45 (KTCLFCKRSHVVCDKQRPCSRCVKRDIAHLC) constitute a DNA-binding region (zn(2)-C6 fungal-type). 2 disordered regions span residues 52–106 (VPNE…PKLD) and 158–218 (ASNV…KEES). Polar residues-rich tracts occupy residues 56–70 (MPSQ…NNIQ) and 84–96 (DYQN…SGST). Ser102 is subject to Phosphoserine. Positions 160-177 (NVHLENGSQTTQSPLEYQ) are enriched in polar residues. Residues 178 to 192 (NDNRRDEIGVARQEN) are compositionally biased toward basic and acidic residues. Polar residues predominate over residues 193 to 206 (RSPTIMSGSSNSIS). Over residues 207 to 218 (KGDKQDQEKEES) the composition is skewed to basic and acidic residues. Phosphothreonine is present on Thr231.

In terms of processing, phosphorylated by SNF1 in absence of glucose. The phosphorylation is required for induction of transcription of gluconeogenic genes.

It localises to the cytoplasm. The protein localises to the nucleus. In terms of biological role, transcription factor which regulates the expression of genes for gluconeogenesis, the TCA cycle, and glucose metabolism. Involved in the cell wall remodeling process and drug resistance. The polypeptide is Regulator of drug sensitivity 2 (RDS2) (Saccharomyces cerevisiae (strain ATCC 204508 / S288c) (Baker's yeast)).